Here is an 844-residue protein sequence, read N- to C-terminus: Putative ubiquitin thioesterase 232R (844 aa).

Disordered stretches follow at residues 136 to 223 (NSST…DEAE), 261 to 287 (SRRKSPSPSPVPPSTRCDPTTTAPPME), 326 to 377 (LLNG…PELT), and 422 to 541 (QKKQ…KLSV). Positions 137–216 (SSTRSRSPSV…PSRQSVRQSS (80 aa)) are enriched in low complexity. Low complexity-rich tracts occupy residues 332 to 341 (RPSPSLPQSR) and 354 to 364 (RSPSVGSPSVR). Positions 429 to 438 (SPSPTPPSPV) are enriched in pro residues. Residues 472 to 485 (VQKKMGKSGEREPK) show a composition bias toward basic and acidic residues. Residues 504–518 (SLRSRLSTQQQTQQS) show a composition bias toward low complexity. Positions 526-535 (ESIKPEESVR) are enriched in basic and acidic residues. Residues 590-725 (YTVKQVSGDG…NYHYTSLVPI (136 aa)) enclose the OTU domain. Residue aspartate 598 is part of the active site. Cysteine 601 (nucleophile) is an active-site residue. Histidine 718 is an active-site residue.

The enzyme catalyses Thiol-dependent hydrolysis of ester, thioester, amide, peptide and isopeptide bonds formed by the C-terminal Gly of ubiquitin (a 76-residue protein attached to proteins as an intracellular targeting signal).. In terms of biological role, hydrolase that can remove conjugated ubiquitin from proteins and may therefore play an important regulatory role at the level of protein turnover by preventing degradation. The protein is Putative ubiquitin thioesterase 232R of Aedes vexans (Inland floodwater mosquito).